A 365-amino-acid chain; its full sequence is Peptide chain release factor 2 (365 aa).

Gln252 carries the post-translational modification N5-methylglutamine.

This sequence belongs to the prokaryotic/mitochondrial release factor family. In terms of processing, methylated by PrmC. Methylation increases the termination efficiency of RF2.

The protein localises to the cytoplasm. Peptide chain release factor 2 directs the termination of translation in response to the peptide chain termination codons UGA and UAA. The chain is Peptide chain release factor 2 from Aeromonas hydrophila subsp. hydrophila (strain ATCC 7966 / DSM 30187 / BCRC 13018 / CCUG 14551 / JCM 1027 / KCTC 2358 / NCIMB 9240 / NCTC 8049).